The primary structure comprises 551 residues: CTP synthase (551 aa).

Positions 1–265 are amidoligase domain; it reads MTRYLFITGG…DHIVAEKWGL (265 aa). Residue S13 participates in CTP binding. S13 contributes to the UTP binding site. Residues 14–19 and D71 each bind ATP; that span reads SLGKGI. D71 and E139 together coordinate Mg(2+). CTP contacts are provided by residues 146 to 148, 186 to 191, and K222; these read DIE and KTKPTQ. Residues 186 to 191 and K222 each bind UTP; that span reads KTKPTQ. The region spanning 290 to 541 is the Glutamine amidotransferase type-1 domain; that stretch reads TVAMVGKYVD…LRAAIAHRDG (252 aa). Position 351 (G351) interacts with L-glutamine. C378 (nucleophile; for glutamine hydrolysis) is an active-site residue. L-glutamine is bound by residues 379 to 382, E402, and R469; that span reads LGMQ. Catalysis depends on residues H514 and E516.

This sequence belongs to the CTP synthase family. Homotetramer.

It carries out the reaction UTP + L-glutamine + ATP + H2O = CTP + L-glutamate + ADP + phosphate + 2 H(+). The catalysed reaction is L-glutamine + H2O = L-glutamate + NH4(+). It catalyses the reaction UTP + NH4(+) + ATP = CTP + ADP + phosphate + 2 H(+). It functions in the pathway pyrimidine metabolism; CTP biosynthesis via de novo pathway; CTP from UDP: step 2/2. With respect to regulation, allosterically activated by GTP, when glutamine is the substrate; GTP has no effect on the reaction when ammonia is the substrate. The allosteric effector GTP functions by stabilizing the protein conformation that binds the tetrahedral intermediate(s) formed during glutamine hydrolysis. Inhibited by the product CTP, via allosteric rather than competitive inhibition. Its function is as follows. Catalyzes the ATP-dependent amination of UTP to CTP with either L-glutamine or ammonia as the source of nitrogen. Regulates intracellular CTP levels through interactions with the four ribonucleotide triphosphates. The chain is CTP synthase from Halorhodospira halophila (strain DSM 244 / SL1) (Ectothiorhodospira halophila (strain DSM 244 / SL1)).